A 154-amino-acid chain; its full sequence is uncharacterized protein (154 aa).

The N-terminal stretch at 1–33 (MTKRGIQAFAGGIILATAVLAAVFYLTDEDQAA) is a signal peptide.

This is an uncharacterized protein from Bacillus subtilis (strain 168).